The following is a 22-amino-acid chain: Mu-conotoxin GIIIC (22 aa).

Disulfide bonds link Cys3/Cys15, Cys4/Cys20, and Cys10/Cys21. Pro6, Pro7, and Pro17 each carry 4-hydroxyproline. Alanine amide is present on Ala22.

Belongs to the conotoxin M superfamily. As to expression, expressed by the venom duct.

It localises to the secreted. Functionally, mu-conotoxins block voltage-gated sodium channels (Nav). This toxin shows potent activity on Nav1.4/SCN4A (IC(50)=286 nM), and weak activity on mNav1.6/SCN8A. In Conus geographus (Geography cone), this protein is Mu-conotoxin GIIIC.